The chain runs to 170 residues: Glycine cleavage system H protein, mitochondrial (170 aa).

Residues 1 to 47 (MLRTTRLWTTRMPTVSKLFLRNSSGNALNKNKLPFLYSSQGPQAVRY) constitute a mitochondrion transit peptide. In terms of domain architecture, Lipoyl-binding spans 61–143 (TAFVGITKYA…MGDGWLVKMK (83 aa)). Lys102 is subject to N6-lipoyllysine.

This sequence belongs to the GcvH family. In terms of assembly, component of the glycine decarboxylase complex (GDC), which is composed of four proteins: P, T, L and H. Requires (R)-lipoate as cofactor.

It is found in the mitochondrion. Its function is as follows. The glycine cleavage system (glycine decarboxylase complex) catalyzes the degradation of glycine. The H protein shuttles the methylamine group of glycine from the P protein to the T protein. The sequence is that of Glycine cleavage system H protein, mitochondrial (GCV3) from Saccharomyces cerevisiae (strain ATCC 204508 / S288c) (Baker's yeast).